Here is a 196-residue protein sequence, read N- to C-terminus: Recombination protein RecR (196 aa).

A C4-type zinc finger spans residues 57–72; that stretch reads CERCNTFTEAPVCSTC. The region spanning 80–175 is the Toprim domain; that stretch reads RQLCVVETPA…SVTRLARGVP (96 aa).

Belongs to the RecR family.

May play a role in DNA repair. It seems to be involved in an RecBC-independent recombinational process of DNA repair. It may act with RecF and RecO. This chain is Recombination protein RecR, found in Methylibium petroleiphilum (strain ATCC BAA-1232 / LMG 22953 / PM1).